The chain runs to 293 residues: Phosphoribosylaminoimidazole-succinocarboxamide synthase (293 aa).

This sequence belongs to the SAICAR synthetase family.

It carries out the reaction 5-amino-1-(5-phospho-D-ribosyl)imidazole-4-carboxylate + L-aspartate + ATP = (2S)-2-[5-amino-1-(5-phospho-beta-D-ribosyl)imidazole-4-carboxamido]succinate + ADP + phosphate + 2 H(+). It participates in purine metabolism; IMP biosynthesis via de novo pathway; 5-amino-1-(5-phospho-D-ribosyl)imidazole-4-carboxamide from 5-amino-1-(5-phospho-D-ribosyl)imidazole-4-carboxylate: step 1/2. The polypeptide is Phosphoribosylaminoimidazole-succinocarboxamide synthase (Desulfosudis oleivorans (strain DSM 6200 / JCM 39069 / Hxd3) (Desulfococcus oleovorans)).